We begin with the raw amino-acid sequence, 157 residues long: uncharacterized protein (157 aa).

May be a DNA-binding protein involved in virion nucleoprotein condensation. This is an uncharacterized protein from Mycoplasma (Bacteriophage L2).